The sequence spans 387 residues: Anhydro-N-acetylmuramic acid kinase (387 aa).

ATP is bound at residue 17–24; it reads GTSMDGVD.

It belongs to the anhydro-N-acetylmuramic acid kinase family.

It carries out the reaction 1,6-anhydro-N-acetyl-beta-muramate + ATP + H2O = N-acetyl-D-muramate 6-phosphate + ADP + H(+). It functions in the pathway amino-sugar metabolism; 1,6-anhydro-N-acetylmuramate degradation. Its pathway is cell wall biogenesis; peptidoglycan recycling. Catalyzes the specific phosphorylation of 1,6-anhydro-N-acetylmuramic acid (anhMurNAc) with the simultaneous cleavage of the 1,6-anhydro ring, generating MurNAc-6-P. Is required for the utilization of anhMurNAc either imported from the medium or derived from its own cell wall murein, and thus plays a role in cell wall recycling. The chain is Anhydro-N-acetylmuramic acid kinase from Burkholderia pseudomallei (strain K96243).